A 616-amino-acid polypeptide reads, in one-letter code: FAD-linked oxidoreductase cheF (616 aa).

The 185-residue stretch at 160-344 (NQGLVSPWYV…LSMTVRVEPA (185 aa)) folds into the FAD-binding PCMH-type domain.

It belongs to the oxygen-dependent FAD-linked oxidoreductase family. Requires FAD as cofactor.

It participates in secondary metabolite biosynthesis. FAD-linked oxidoreductase; part of the gene cluster that mediates the biosynthesis of chaetoglobosin A which has a unique inhibitory activity against actin polymerization in mammalian cells. Chaetoglobosin A and its intermediates are involved in the morphological differentiation of C.globosum. The first step of the pathway is the synthesis of prochaetoglobosin I via condensation of one acetyl-CoA, 8 malonyl-CoA, and a L-tryptophan molecule by the PKS-NRPS hybrid synthetase cheA, followed by reduction of backbone double bond to install desired geometry by the enoyl reductase cheB. Further multiple oxidation steps performed by the cytochrome P450 monooxygenases cheE and cheG, as well as by the FAD-linked oxidoreductase cheF, lead to the formation of chaetoglobosin A. Depending on the order of action of these reductases, distinct intermediates can be identified. Within the pathway, the cytochrome P450 monooxygenase cheE catalyzes a stereospecific epoxidation on prochaetoglobosin I, cytoglobosin D, and chaetoglobosin J intermediates. The FAD-linked oxidoreductase cheF performs dehydrogenation of the C-20 hydroxyl groups in the 20-dihyrochaetoglobosin A and cytoglobosin D intermediates. Finally, the cytochrome P450 monooxygenase cheG can catalyze the stereospecific dihydroxylation of prochaetoglobosin I and prochaetoglobosin IV at C-19 and C-20, respectively. The Diels-Alderase cheD may play a role in the post-PKS-NRPS biosynthetic steps catalyzing Diels-Alder cyclization. The polypeptide is FAD-linked oxidoreductase cheF (Chaetomium globosum (strain ATCC 6205 / CBS 148.51 / DSM 1962 / NBRC 6347 / NRRL 1970) (Soil fungus)).